We begin with the raw amino-acid sequence, 260 residues long: Purine nucleoside phosphorylase PD_1754 (260 aa).

The Zn(2+) site is built by His-79, Cys-120, and His-137.

This sequence belongs to the purine nucleoside phosphorylase YfiH/LACC1 family. As to quaternary structure, homodimer. Cu(2+) serves as cofactor. Zn(2+) is required as a cofactor.

The enzyme catalyses adenosine + phosphate = alpha-D-ribose 1-phosphate + adenine. The catalysed reaction is S-methyl-5'-thioadenosine + phosphate = 5-(methylsulfanyl)-alpha-D-ribose 1-phosphate + adenine. It catalyses the reaction inosine + phosphate = alpha-D-ribose 1-phosphate + hypoxanthine. It carries out the reaction adenosine + H2O + H(+) = inosine + NH4(+). Functionally, purine nucleoside enzyme that catalyzes the phosphorolysis of adenosine and inosine nucleosides, yielding D-ribose 1-phosphate and the respective free bases, adenine and hypoxanthine. Also catalyzes the phosphorolysis of S-methyl-5'-thioadenosine into adenine and S-methyl-5-thio-alpha-D-ribose 1-phosphate. Also has adenosine deaminase activity. The sequence is that of Purine nucleoside phosphorylase PD_1754 from Xylella fastidiosa (strain Temecula1 / ATCC 700964).